Here is a 158-residue protein sequence, read N- to C-terminus: Small ribosomal subunit protein uS9 (158 aa).

It belongs to the universal ribosomal protein uS9 family.

The polypeptide is Small ribosomal subunit protein uS9 (Brucella canis (strain ATCC 23365 / NCTC 10854 / RM-666)).